Reading from the N-terminus, the 107-residue chain is MMKVLVVVALLVTLISYSSGEGIDDLEADELLSLMANEQTRKECIPKHHECTSNKHGCCRGNFFKYKCQCTTVVTQDGEQTERCFCGTPPHHKAAELVVGFGKKIFG.

A signal peptide spans 1–20 (MMKVLVVVALLVTLISYSSG). Residues 21–41 (EGIDDLEADELLSLMANEQTR) constitute a propeptide that is removed on maturation. Disulfide bonds link C44/C59, C51/C68, C58/C86, and C70/C84.

This sequence belongs to the neurotoxin 19 (CSTX) family. 04 (U1-Lctx) subfamily. Expressed by the venom gland.

The protein resides in the secreted. The polypeptide is U1-lycotoxin-Ls1b (Lycosa singoriensis (Wolf spider)).